The chain runs to 472 residues: Chromosomal replication initiator protein DnaA (472 aa).

The interval M1–E73 is domain I, interacts with DnaA modulators. The segment at E73–S128 is domain II. A disordered region spans residues E92–G127. Positions V97 to S112 are enriched in basic and acidic residues. Residues P129–S351 are domain III, AAA+ region. ATP-binding residues include G176, G178, K179, and T180. The tract at residues K352–E472 is domain IV, binds dsDNA.

This sequence belongs to the DnaA family. In terms of assembly, oligomerizes as a right-handed, spiral filament on DNA at oriC.

The protein resides in the cytoplasm. Its function is as follows. Plays an essential role in the initiation and regulation of chromosomal replication. ATP-DnaA binds to the origin of replication (oriC) to initiate formation of the DNA replication initiation complex once per cell cycle. Binds the DnaA box (a 9 base pair repeat at the origin) and separates the double-stranded (ds)DNA. Forms a right-handed helical filament on oriC DNA; dsDNA binds to the exterior of the filament while single-stranded (ss)DNA is stabiized in the filament's interior. The ATP-DnaA-oriC complex binds and stabilizes one strand of the AT-rich DNA unwinding element (DUE), permitting loading of DNA polymerase. After initiation quickly degrades to an ADP-DnaA complex that is not apt for DNA replication. Binds acidic phospholipids. The protein is Chromosomal replication initiator protein DnaA of Rhodopseudomonas palustris (strain HaA2).